The following is a 510-amino-acid chain: Aspartate kinase FUB3 (510 aa).

2 consecutive ACT domains span residues 372–440 and 446–510; these read ILSN…VLPD and LVGA…KNAI.

This sequence belongs to the aspartokinase family.

It catalyses the reaction L-aspartate + ATP = 4-phospho-L-aspartate + ADP. It functions in the pathway mycotoxin biosynthesis. Aspartate kinase; part of the gene cluster that mediates the biosynthesis of fusaric acid, a mycotoxin with low to moderate toxicity to animals and humans, but with high phytotoxic properties. L-aspartate is suggested as fusaric acid amino acid precursor that is activated and further processed to O-acetyl-L-homoserine by cluster enzymes aspartate kinase FUB3 and homoserine O-acetyltransferase FUB5, as well as enzymes of the primary metabolism. The polyketide synthase (PKS) FUB1 generates the triketide trans-2-hexenal which is presumptively released by the hydrolase FUB4 and linked to the NRPS-bound amino acid precursor by NAD(P)-dependent dehydrogenase FUB6. FUB1, FUB4, and the non-canonical NRPS Fub8 may form an enzyme complex. Further processing of the NRPS-bound intermediate might be carried out by FUB6 and the sulfhydrylase FUB7, enabling a spontaneous electrocyclization to close the carbon backbone of fusaric acid. Dihydrofusaric acid is likely to be released via reduction by the thioester reductase (TR) domain of FUB8 whereupon the final oxidation to fusaric acid may (also) be performed by the FMN-dependent dehydrogenase FUB9. This Gibberella fujikuroi (strain CBS 195.34 / IMI 58289 / NRRL A-6831) (Bakanae and foot rot disease fungus) protein is Aspartate kinase FUB3.